The sequence spans 1543 residues: ATP-binding cassette sub-family C member 2 (1543 aa).

The Extracellular portion of the chain corresponds to 1–26 (MDEFCNSTFWNLSLLKSPEADLPLCF). N-linked (GlcNAc...) asparagine glycans are attached at residues Asn-6 and Asn-11. The chain crosses the membrane as a helical span at residues 27–47 (EQTVLVWIPLGFLWLLAPWQL). The Cytoplasmic segment spans residues 48–67 (YRIYRSRTKRFAITKFYLAK). The chain crosses the membrane as a helical span at residues 68-88 (QVFVVCLLILAAIDLSLALTE). Over 89-92 (DTGQ) the chain is Extracellular. Residues 93–113 (ATIPPVKYTNPILYLCTWLLV) form a helical membrane-spanning segment. The Cytoplasmic portion of the chain corresponds to 114–125 (LVIQHCRQCCIQ). The chain crosses the membrane as a helical span at residues 126 to 146 (KNSWFLSMFWILSLLCGIFQF). Residues 147–164 (QTLIRALLQDSKSNMTYS) are Extracellular-facing. Asn-160 carries N-linked (GlcNAc...) asparagine glycosylation. The chain crosses the membrane as a helical span at residues 165-185 (CLFFVSYGFQIVILILSAFSE). Residues 186 to 311 (SSDSTHAPSA…DFPKSWLVKA (126 aa)) lie on the Cytoplasmic side of the membrane. The tract at residues 260-285 (LKKSQQSPEGTSHGLTKKQSQSQDVL) is disordered. Residues 263–283 (SQQSPEGTSHGLTKKQSQSQD) are compositionally biased toward polar residues. 2 positions are modified to phosphoserine: Ser-279 and Ser-281. A helical membrane pass occupies residues 312 to 332 (LFKTFYVVILKSFILKLAHDI). Residues 320-603 (ILKSFILKLA…LPMVISSVIQ (284 aa)) enclose the ABC transmembrane type-1 1 domain. The Extracellular portion of the chain corresponds to 333–358 (LLFLNPQLLKFLIGFVKDPDSYPWVG). A helical membrane pass occupies residues 359–379 (YIYAILMFSVTLIQSFFLQCY). The Cytoplasmic segment spans residues 380 to 435 (FQFCFVLGMTVRTTIIASVYKKALTLSNLARRQYTIGETVNLMSVDSQKLMDVTNY). A helical transmembrane segment spans residues 436–456 (IHLLWSSVLQIALSIFFLWRE). Residues 457-459 (LGP) lie on the Extracellular side of the membrane. A helical transmembrane segment spans residues 460–480 (SILAGVGLMVLLVPVNGVLAT). Over 481–542 (KIRKIQVQNM…NLLRFSQLQT (62 aa)) the chain is Cytoplasmic. A helical membrane pass occupies residues 543–563 (ILIFILHLTPTLVSVITFSVY). At 564–585 (VLVDSQNVLNAEKAFTSITLFN) the chain is on the extracellular side. The helical transmembrane segment at 586–606 (ILRFPLAMLPMVISSVIQASV) threads the bilayer. At 607 to 969 (SVDRLEQYLG…VKFSIYLKYL (363 aa)) the chain is on the cytoplasmic side. An ABC transporter 1 domain is found at 635–859 (VQFSEASFTW…KGVFAKNWKT (225 aa)). 669 to 676 (GTVGSGKS) serves as a coordination point for ATP. At Ser-876 the chain carries Phosphoserine. Positions 903–927 (RENSLRRTLSRSSRSGSRRGKSLKS) are disordered. The span at 908–917 (RRTLSRSSRS) shows a compositional bias: low complexity. Residues Ser-924 and Ser-928 each carry the phosphoserine modification. Residues 970–990 (QAVGWWSLLFIVIFYVLNYVA) form a helical membrane-spanning segment. The ABC transmembrane type-1 2 domain maps to 977–1262 (LLFIVIFYVL…LVRMTSEVET (286 aa)). Over 991 to 1031 (FIGTNLWLSAWTSDSEKQNGTDNSPSQRDMRIGVFGALGIA) the chain is Extracellular. A glycan (N-linked (GlcNAc...) asparagine) is linked at Asn-1009. The chain crosses the membrane as a helical span at residues 1032–1052 (QGIFLLSSSLWSIYACRNASK). At 1053–1095 (TLHRQLLTNILRAPMSFFDTTPTGRIVNRFAGDISTVDDTLPQ) the chain is on the cytoplasmic side. A helical transmembrane segment spans residues 1096–1116 (TLRSWLLCFFGIVSTLVMICM). Position 1117 (Ala-1117) is a topological domain, extracellular. The helical transmembrane segment at 1118–1138 (TPIFIIIIIPLSILYVSVQVF) threads the bilayer. Residues 1139 to 1209 (YVATSRQLRR…TSNRWLAIRL (71 aa)) are Cytoplasmic-facing. A helical membrane pass occupies residues 1210–1230 (ELVGNLIVFCSALLLVIYKNS). At 1231-1232 (LT) the chain is on the extracellular side. Residues 1233-1253 (GDTVGFVLSNALNITQTLNWL) traverse the membrane as a helical segment. The Cytoplasmic portion of the chain corresponds to 1254-1543 (VRMTSEVETN…GIESVNHTEL (290 aa)). The ABC transporter 2 domain maps to 1298–1532 (IQFNNYQVRY…MGPFYLMAKE (235 aa)). 1332–1339 (GRTGAGKS) is an ATP binding site. Position 1436 is a phosphoserine (Ser-1436).

Belongs to the ABC transporter superfamily. ABCC family. Conjugate transporter (TC 3.A.1.208) subfamily. As to expression, expressed in liver.

The protein localises to the apical cell membrane. It carries out the reaction an S-substituted glutathione(in) + ATP + H2O = an S-substituted glutathione(out) + ADP + phosphate + H(+). The catalysed reaction is taurolithocholate 3-sulfate(in) + ATP + H2O = taurolithocholate 3-sulfate(out) + ADP + phosphate + H(+). The enzyme catalyses ATP + H2O + xenobioticSide 1 = ADP + phosphate + xenobioticSide 2.. It catalyses the reaction leukotriene C4(in) + ATP + H2O = leukotriene C4(out) + ADP + phosphate + H(+). It carries out the reaction 17beta-estradiol 17-O-(beta-D-glucuronate)(in) + ATP + H2O = 17beta-estradiol 17-O-(beta-D-glucuronate)(out) + ADP + phosphate + H(+). The catalysed reaction is (4Z,15Z)-bilirubin IXalpha C8-beta-D-glucuronoside(in) + ATP + H2O = (4Z,15Z)-bilirubin IXalpha C8-beta-D-glucuronoside(out) + ADP + phosphate + H(+). The enzyme catalyses (4Z,15Z)-bilirubin IXalpha C8,C12-beta-D-bisglucuronoside(in) + ATP + H2O = (4Z,15Z)-bilirubin IXalpha C8,C12-beta-D-bisglucuronoside(out) + ADP + phosphate + H(+). ATP-dependent transporter of the ATP-binding cassette (ABC) family that binds and hydrolyzes ATP to enable active transport of various substrates including many drugs, toxicants and endogenous compound across cell membranes. Transports a wide variety of conjugated organic anions such as sulfate-, glucuronide- and glutathione (GSH)-conjugates of endo- and xenobiotics substrates. Mediates hepatobiliary excretion of mono- and bis-glucuronidated bilirubin molecules and therefore play an important role in bilirubin detoxification. Mediates also hepatobiliary excretion of others glucuronide conjugates such as 17beta-estradiol 17-glucosiduronic acid and leukotriene C4. Transports sulfated bile salt such as taurolithocholate sulfate. Transports various anticancer drugs, such as anthracycline, vinca alkaloid and methotrexate and HIV-drugs such as protease inhibitors. The protein is ATP-binding cassette sub-family C member 2 of Mus musculus (Mouse).